The following is a 605-amino-acid chain: Arginine--tRNA ligase (605 aa).

The 'HIGH' region signature appears at 131 to 141 (ANPTGPMHVGH). A disordered region spans residues 290–309 (PPPKSKKGQPAPAQAASNSA). A compositionally biased stretch (low complexity) spans 298–309 (QPAPAQAASNSA).

The protein belongs to the class-I aminoacyl-tRNA synthetase family. Monomer.

It localises to the cytoplasm. The catalysed reaction is tRNA(Arg) + L-arginine + ATP = L-arginyl-tRNA(Arg) + AMP + diphosphate. This is Arginine--tRNA ligase from Anaeromyxobacter sp. (strain Fw109-5).